The chain runs to 452 residues: Probable dihydrolipoyllysine-residue succinyltransferase component of 2-oxoglutarate dehydrogenase complex, mitochondrial (452 aa).

A Lipoyl-binding domain is found at 42 to 117 (STRIKTPPFP…TIDQDIAVID (76 aa)). Residue Lys-83 is modified to N6-lipoyllysine. The disordered stretch occupies residues 119–225 (SAAPPEGGSA…FSRNEDRVKM (107 aa)). Composition is skewed to basic and acidic residues over residues 130–144 (PKKD…DAAK), 154–170 (KPIE…EQKE), and 195–209 (AKSE…KATE). Catalysis depends on residues His-424 and Asp-428.

Belongs to the 2-oxoacid dehydrogenase family. (R)-lipoate serves as cofactor.

Its subcellular location is the mitochondrion. The enzyme catalyses N(6)-[(R)-dihydrolipoyl]-L-lysyl-[protein] + succinyl-CoA = N(6)-[(R)-S(8)-succinyldihydrolipoyl]-L-lysyl-[protein] + CoA. It participates in amino-acid degradation; L-lysine degradation via saccharopine pathway; glutaryl-CoA from L-lysine: step 6/6. Its function is as follows. The 2-oxoglutarate dehydrogenase complex catalyzes the overall conversion of 2-oxoglutarate to succinyl-CoA and CO(2). It contains multiple copies of three enzymatic components: 2-oxoglutarate dehydrogenase (E1), dihydrolipoamide succinyltransferase (E2) and lipoamide dehydrogenase (E3). The chain is Probable dihydrolipoyllysine-residue succinyltransferase component of 2-oxoglutarate dehydrogenase complex, mitochondrial (kgd2) from Schizosaccharomyces pombe (strain 972 / ATCC 24843) (Fission yeast).